A 635-amino-acid chain; its full sequence is Moesin/ezrin/radixin homolog 2 (635 aa).

In terms of domain architecture, FERM spans 12–305 (LSVRVSTFDS…GNHDLYMRRR (294 aa)).

Interacts with Moe and arm at the adherens junction. Forms a complex with Kibra and Ex. Interacts (via FERM domain) with Sav (via FBM motif). Interacts with Schip1. As to expression, expressed predominantly in the germline. Expressed in the developing oocyte from stage 6 to the end of oogenesis and in the apical ends of follical cells from stage 10. Ubiquitous expression throughout embryogenesis with enhanced expression in mesoderm of early embryos and midgut of late embryos. In embryonic CNS, expression is seen in neuropil and developing brain and is enhanced in neuronal cell bodies. In embryonic PNS, expression is seen within the cell body. In third instar larvae, expression is uniform in the eye imaginal disk and is enhanced at the morphogenetic furrow. In pupal eyes, expression is seen in the cytoplasm of secondary and tertiary pigment cells, bristle precursor cells and rhabdomeres.

Its subcellular location is the cell junction. The protein resides in the adherens junction. It localises to the cell membrane. The protein localises to the cytoplasm. It is found in the cytoskeleton. Its subcellular location is the apical cell membrane. The protein resides in the cell projection. It localises to the rhabdomere. Regulator of the Hippo/SWH (Sav/Wts/Hpo) signaling pathway, a signaling pathway that plays a pivotal role in organ size control and tumor suppression by restricting proliferation and promoting apoptosis. The core of this pathway is composed of a kinase cascade wherein Hippo (Hpo), in complex with its regulatory protein Salvador (Sav), phosphorylates and activates Warts (Wts) in complex with its regulatory protein Mats, which in turn phosphorylates and inactivates the Yorkie (Yki) oncoprotein. Mer acts synergistically along with Ex and Kibra to regulate the Hippo signaling pathway. The sequence is that of Moesin/ezrin/radixin homolog 2 (Mer) from Drosophila melanogaster (Fruit fly).